Reading from the N-terminus, the 181-residue chain is NAD(P)H-quinone oxidoreductase subunit I, chloroplastic (181 aa).

2 consecutive 4Fe-4S ferredoxin-type domains span residues G52–E81 and K92–E121. [4Fe-4S] cluster-binding residues include C61, C64, C67, C71, C101, C104, C107, and C111.

The protein belongs to the complex I 23 kDa subunit family. As to quaternary structure, NDH is composed of at least 16 different subunits, 5 of which are encoded in the nucleus. [4Fe-4S] cluster is required as a cofactor.

The protein resides in the plastid. It localises to the chloroplast thylakoid membrane. The enzyme catalyses a plastoquinone + NADH + (n+1) H(+)(in) = a plastoquinol + NAD(+) + n H(+)(out). It catalyses the reaction a plastoquinone + NADPH + (n+1) H(+)(in) = a plastoquinol + NADP(+) + n H(+)(out). Functionally, NDH shuttles electrons from NAD(P)H:plastoquinone, via FMN and iron-sulfur (Fe-S) centers, to quinones in the photosynthetic chain and possibly in a chloroplast respiratory chain. The immediate electron acceptor for the enzyme in this species is believed to be plastoquinone. Couples the redox reaction to proton translocation, and thus conserves the redox energy in a proton gradient. The protein is NAD(P)H-quinone oxidoreductase subunit I, chloroplastic of Staurastrum punctulatum (Green alga).